A 466-amino-acid chain; its full sequence is Bifunctional protein GlmU (466 aa).

Residues 1–236 (MEVMPQPLTI…PAEALGINDR (236 aa)) are pyrophosphorylase. UDP-N-acetyl-alpha-D-glucosamine is bound by residues 13–16 (LAAG), K27, Q79, 84–85 (GT), 107–109 (YGD), G146, E161, N176, and N234. Residue D109 participates in Mg(2+) binding. A Mg(2+)-binding site is contributed by N234. The interval 237-257 (AQLAEVDRIFRDRKRRAVMAA) is linker. The interval 258–466 (GVTLIQPETI…AKKRRKLAKT (209 aa)) is N-acetyltransferase. UDP-N-acetyl-alpha-D-glucosamine contacts are provided by R340 and K358. The Proton acceptor role is filled by H370. Positions 373 and 384 each coordinate UDP-N-acetyl-alpha-D-glucosamine. Acetyl-CoA-binding positions include A387, 393 to 394 (NY), S412, A430, and R447.

In the N-terminal section; belongs to the N-acetylglucosamine-1-phosphate uridyltransferase family. The protein in the C-terminal section; belongs to the transferase hexapeptide repeat family. Homotrimer. Mg(2+) is required as a cofactor.

It localises to the cytoplasm. It catalyses the reaction alpha-D-glucosamine 1-phosphate + acetyl-CoA = N-acetyl-alpha-D-glucosamine 1-phosphate + CoA + H(+). It carries out the reaction N-acetyl-alpha-D-glucosamine 1-phosphate + UTP + H(+) = UDP-N-acetyl-alpha-D-glucosamine + diphosphate. It functions in the pathway nucleotide-sugar biosynthesis; UDP-N-acetyl-alpha-D-glucosamine biosynthesis; N-acetyl-alpha-D-glucosamine 1-phosphate from alpha-D-glucosamine 6-phosphate (route II): step 2/2. The protein operates within nucleotide-sugar biosynthesis; UDP-N-acetyl-alpha-D-glucosamine biosynthesis; UDP-N-acetyl-alpha-D-glucosamine from N-acetyl-alpha-D-glucosamine 1-phosphate: step 1/1. It participates in bacterial outer membrane biogenesis; LPS lipid A biosynthesis. Its function is as follows. Catalyzes the last two sequential reactions in the de novo biosynthetic pathway for UDP-N-acetylglucosamine (UDP-GlcNAc). The C-terminal domain catalyzes the transfer of acetyl group from acetyl coenzyme A to glucosamine-1-phosphate (GlcN-1-P) to produce N-acetylglucosamine-1-phosphate (GlcNAc-1-P), which is converted into UDP-GlcNAc by the transfer of uridine 5-monophosphate (from uridine 5-triphosphate), a reaction catalyzed by the N-terminal domain. This Solibacter usitatus (strain Ellin6076) protein is Bifunctional protein GlmU.